The chain runs to 329 residues: DNA-directed RNA polymerase subunit alpha (329 aa).

The tract at residues 1–234 (MSGSVTEFLK…EQLDAFVELR (234 aa)) is alpha N-terminal domain (alpha-NTD). The alpha C-terminal domain (alpha-CTD) stretch occupies residues 248–329 (FDPILLRPVD…WPPESIAEKD (82 aa)).

This sequence belongs to the RNA polymerase alpha chain family. In terms of assembly, homodimer. The RNAP catalytic core consists of 2 alpha, 1 beta, 1 beta' and 1 omega subunit. When a sigma factor is associated with the core the holoenzyme is formed, which can initiate transcription.

The catalysed reaction is RNA(n) + a ribonucleoside 5'-triphosphate = RNA(n+1) + diphosphate. DNA-dependent RNA polymerase catalyzes the transcription of DNA into RNA using the four ribonucleoside triphosphates as substrates. This is DNA-directed RNA polymerase subunit alpha from Pseudoalteromonas atlantica (strain T6c / ATCC BAA-1087).